The chain runs to 300 residues: NAD kinase (300 aa).

The active-site Proton acceptor is D78. NAD(+)-binding positions include 78–79, 152–153, H163, R180, D182, and 193–198; these read DG, ND, and TAYALS.

The protein belongs to the NAD kinase family. A divalent metal cation is required as a cofactor.

It localises to the cytoplasm. The catalysed reaction is NAD(+) + ATP = ADP + NADP(+) + H(+). Functionally, involved in the regulation of the intracellular balance of NAD and NADP, and is a key enzyme in the biosynthesis of NADP. Catalyzes specifically the phosphorylation on 2'-hydroxyl of the adenosine moiety of NAD to yield NADP. This is NAD kinase from Alcanivorax borkumensis (strain ATCC 700651 / DSM 11573 / NCIMB 13689 / SK2).